We begin with the raw amino-acid sequence, 257 residues long: Acetylglutamate kinase (257 aa).

Substrate-binding positions include 43 to 44, Arg-65, and Asn-157; that span reads GG. ATP contacts are provided by residues 180–185 and 208–210; these read DISSIL and IIT.

This sequence belongs to the acetylglutamate kinase family. ArgB subfamily. In terms of assembly, homodimer.

It localises to the cytoplasm. The enzyme catalyses N-acetyl-L-glutamate + ATP = N-acetyl-L-glutamyl 5-phosphate + ADP. The protein operates within amino-acid biosynthesis; L-arginine biosynthesis; N(2)-acetyl-L-ornithine from L-glutamate: step 2/4. Functionally, catalyzes the ATP-dependent phosphorylation of N-acetyl-L-glutamate. The polypeptide is Acetylglutamate kinase (Buchnera aphidicola subsp. Acyrthosiphon pisum (strain 5A)).